Here is a 359-residue protein sequence, read N- to C-terminus: 3-dehydroquinate synthase (359 aa).

NAD(+)-binding positions include 70–75 (DAEGGK), 104–108 (GAATD), 128–129 (TT), Lys-141, and Lys-150. Zn(2+)-binding residues include Glu-183, His-246, and His-262.

This sequence belongs to the sugar phosphate cyclases superfamily. Dehydroquinate synthase family. Co(2+) serves as cofactor. Zn(2+) is required as a cofactor. It depends on NAD(+) as a cofactor.

The protein resides in the cytoplasm. The catalysed reaction is 7-phospho-2-dehydro-3-deoxy-D-arabino-heptonate = 3-dehydroquinate + phosphate. It participates in metabolic intermediate biosynthesis; chorismate biosynthesis; chorismate from D-erythrose 4-phosphate and phosphoenolpyruvate: step 2/7. Functionally, catalyzes the conversion of 3-deoxy-D-arabino-heptulosonate 7-phosphate (DAHP) to dehydroquinate (DHQ). The chain is 3-dehydroquinate synthase from Mycolicibacterium gilvum (strain PYR-GCK) (Mycobacterium gilvum (strain PYR-GCK)).